We begin with the raw amino-acid sequence, 395 residues long: ATP-dependent RNA helicase eIF4A (395 aa).

S2 carries the post-translational modification N-acetylserine. A Q motif motif is present at residues 22-50 (YKFDDMELDENLLRGVFGYGFEEPSAIQQ). The 170-residue stretch at 53-222 (IMPIIEGHDV…TKFMRNPVRI (170 aa)) folds into the Helicase ATP-binding domain. 66 to 73 (AQSGTGKT) is an ATP binding site. Position 73 is a phosphothreonine (T73). 2 positions are modified to phosphoserine: S77 and S129. T146 carries the phosphothreonine modification. The short motif at 170–173 (DEAD) is the DEAD box element. Residues 233-394 (GIKQFYVNVE…ELPSDIATLL (162 aa)) enclose the Helicase C-terminal domain.

Belongs to the DEAD box helicase family. eIF4A subfamily. In terms of assembly, component of the eIF4F complex, which composition varies with external and internal environmental conditions. It is composed of at least eIF4A, eIF4E and eIF4G.

The protein resides in the cytoplasm. It catalyses the reaction ATP + H2O = ADP + phosphate + H(+). In terms of biological role, ATP-dependent RNA helicase which is a subunit of the eIF4F complex involved in cap recognition and is required for mRNA binding to ribosome. In the current model of translation initiation, eIF4A unwinds RNA secondary structures in the 5'-UTR of mRNAs which is necessary to allow efficient binding of the small ribosomal subunit, and subsequent scanning for the initiator codon. The chain is ATP-dependent RNA helicase eIF4A (TIF1) from Saccharomyces cerevisiae (strain YJM789) (Baker's yeast).